A 507-amino-acid chain; its full sequence is ATP synthase subunit alpha, chloroplastic (507 aa).

170-177 contacts ATP; that stretch reads GDRQTGKT.

Belongs to the ATPase alpha/beta chains family. F-type ATPases have 2 components, CF(1) - the catalytic core - and CF(0) - the membrane proton channel. CF(1) has five subunits: alpha(3), beta(3), gamma(1), delta(1), epsilon(1). CF(0) has four main subunits: a, b, b' and c.

The protein resides in the plastid. It localises to the chloroplast thylakoid membrane. It catalyses the reaction ATP + H2O + 4 H(+)(in) = ADP + phosphate + 5 H(+)(out). In terms of biological role, produces ATP from ADP in the presence of a proton gradient across the membrane. The alpha chain is a regulatory subunit. The protein is ATP synthase subunit alpha, chloroplastic of Cycas taitungensis (Prince sago).